The chain runs to 164 residues: Small ribosomal subunit protein uS5 (164 aa).

Positions Tyr9 to Ile72 constitute an S5 DRBM domain.

The protein belongs to the universal ribosomal protein uS5 family. As to quaternary structure, part of the 30S ribosomal subunit. Contacts proteins S4 and S8.

Functionally, with S4 and S12 plays an important role in translational accuracy. Its function is as follows. Located at the back of the 30S subunit body where it stabilizes the conformation of the head with respect to the body. This Fusobacterium nucleatum subsp. nucleatum (strain ATCC 25586 / DSM 15643 / BCRC 10681 / CIP 101130 / JCM 8532 / KCTC 2640 / LMG 13131 / VPI 4355) protein is Small ribosomal subunit protein uS5.